The primary structure comprises 544 residues: Chaperonin GroEL (544 aa).

Residues 30–33 (TLGP), K51, 87–91 (DGTTT), G415, 480–482 (DAA), and D496 each bind ATP.

It belongs to the chaperonin (HSP60) family. In terms of assembly, forms a cylinder of 14 subunits composed of two heptameric rings stacked back-to-back. Interacts with the co-chaperonin GroES.

It is found in the cytoplasm. The enzyme catalyses ATP + H2O + a folded polypeptide = ADP + phosphate + an unfolded polypeptide.. In terms of biological role, together with its co-chaperonin GroES, plays an essential role in assisting protein folding. The GroEL-GroES system forms a nano-cage that allows encapsulation of the non-native substrate proteins and provides a physical environment optimized to promote and accelerate protein folding. The chain is Chaperonin GroEL from Sulfurihydrogenibium sp. (strain YO3AOP1).